The sequence spans 250 residues: 1-(5-phosphoribosyl)-5-[(5-phosphoribosylamino)methylideneamino] imidazole-4-carboxamide isomerase (250 aa).

The Proton acceptor role is filled by Asp12. The active-site Proton donor is Asp134.

Belongs to the HisA/HisF family.

The protein resides in the cytoplasm. It catalyses the reaction 1-(5-phospho-beta-D-ribosyl)-5-[(5-phospho-beta-D-ribosylamino)methylideneamino]imidazole-4-carboxamide = 5-[(5-phospho-1-deoxy-D-ribulos-1-ylimino)methylamino]-1-(5-phospho-beta-D-ribosyl)imidazole-4-carboxamide. Its pathway is amino-acid biosynthesis; L-histidine biosynthesis; L-histidine from 5-phospho-alpha-D-ribose 1-diphosphate: step 4/9. The protein is 1-(5-phosphoribosyl)-5-[(5-phosphoribosylamino)methylideneamino] imidazole-4-carboxamide isomerase of Actinobacillus pleuropneumoniae serotype 3 (strain JL03).